The primary structure comprises 443 residues: Na(+)-translocating NADH-quinone reductase subunit A (443 aa).

The protein belongs to the NqrA family. In terms of assembly, composed of six subunits; NqrA, NqrB, NqrC, NqrD, NqrE and NqrF.

It catalyses the reaction a ubiquinone + n Na(+)(in) + NADH + H(+) = a ubiquinol + n Na(+)(out) + NAD(+). Its function is as follows. NQR complex catalyzes the reduction of ubiquinone-1 to ubiquinol by two successive reactions, coupled with the transport of Na(+) ions from the cytoplasm to the periplasm. NqrA to NqrE are probably involved in the second step, the conversion of ubisemiquinone to ubiquinol. In Mannheimia succiniciproducens (strain KCTC 0769BP / MBEL55E), this protein is Na(+)-translocating NADH-quinone reductase subunit A.